The following is a 239-amino-acid chain: Large ribosomal subunit protein bL25 (239 aa).

The segment at 217–239 is disordered; it reads IKAEAHAAEGTQAEGSTEEGQQQ. The span at 229-239 shows a compositional bias: polar residues; the sequence is AEGSTEEGQQQ.

It belongs to the bacterial ribosomal protein bL25 family. CTC subfamily. In terms of assembly, part of the 50S ribosomal subunit; part of the 5S rRNA/L5/L18/L25 subcomplex. Contacts the 5S rRNA. Binds to the 5S rRNA independently of L5 and L18.

In terms of biological role, this is one of the proteins that binds to the 5S RNA in the ribosome where it forms part of the central protuberance. The chain is Large ribosomal subunit protein bL25 from Deinococcus deserti (strain DSM 17065 / CIP 109153 / LMG 22923 / VCD115).